The chain runs to 497 residues: NADH-ubiquinone oxidoreductase chain 4 (497 aa).

The next 14 membrane-spanning stretches (helical) occupy residues 3-23 (FLLYYTLFISFMLWLAALLII), 42-62 (LFFSFFQFILIIFFWILSDNI), 94-114 (ISLLFLLLTFFLTPICILISW), 122-142 (NSFIICLIFITFILFNIFCVL), 144-164 (LVFFYIFFESILIPMFILIGV), 178-198 (LFFYTLLGSLLMLLGILVIYS), 220-240 (ILWASFFFAFCVKVPLFPFHI), 250-270 (PTVGSVILAGVLLKLGTYGLL), 276-296 (IFCDATYFFLPLVYTLCLLGI), 313-333 (IAYASVSHMSFVILGLFTSNI), 340-360 (VFLMLSHGIVSSGLFFCIGCV), 374-394 (GLVSTMPIFSLCLFILILSNI), 418-438 (FAALIATFSIILTAVYSIWLY), and 463-483 (VVGFIFCFITILFGLKGSYII).

Belongs to the complex I subunit 4 family.

It localises to the mitochondrion membrane. It catalyses the reaction a ubiquinone + NADH + 5 H(+)(in) = a ubiquinol + NAD(+) + 4 H(+)(out). In terms of biological role, core subunit of the mitochondrial membrane respiratory chain NADH dehydrogenase (Complex I) that is believed to belong to the minimal assembly required for catalysis. Complex I functions in the transfer of electrons from NADH to the respiratory chain. The immediate electron acceptor for the enzyme is believed to be ubiquinone. This chain is NADH-ubiquinone oxidoreductase chain 4 (ND4), found in Acanthamoeba castellanii (Amoeba).